A 534-amino-acid polypeptide reads, in one-letter code: ATP synthase subunit alpha (534 aa).

170-177 lines the ATP pocket; the sequence is GDRQTGKT. The segment at 505 to 534 is disordered; that stretch reads HEDARVKSETAQAAGKDKDEKAAATAGAGK.

Belongs to the ATPase alpha/beta chains family. F-type ATPases have 2 components, CF(1) - the catalytic core - and CF(0) - the membrane proton channel. CF(1) has five subunits: alpha(3), beta(3), gamma(1), delta(1), epsilon(1). CF(0) has three main subunits: a(1), b(2) and c(9-12). The alpha and beta chains form an alternating ring which encloses part of the gamma chain. CF(1) is attached to CF(0) by a central stalk formed by the gamma and epsilon chains, while a peripheral stalk is formed by the delta and b chains.

Its subcellular location is the cell inner membrane. It catalyses the reaction ATP + H2O + 4 H(+)(in) = ADP + phosphate + 5 H(+)(out). Functionally, produces ATP from ADP in the presence of a proton gradient across the membrane. The alpha chain is a regulatory subunit. The sequence is that of ATP synthase subunit alpha from Acidobacterium capsulatum (strain ATCC 51196 / DSM 11244 / BCRC 80197 / JCM 7670 / NBRC 15755 / NCIMB 13165 / 161).